Here is a 352-residue protein sequence, read N- to C-terminus: Protein SIS1 (352 aa).

Residues 4-70 (ETKLYDLLGV…REIYDQYGLE (67 aa)) enclose the J domain. Phosphoserine is present on S275. The segment at 300–325 (VQPVQPSQTSTYPGQGMPTPKNPSQR) is disordered. Positions 301 to 312 (QPVQPSQTSTYP) are enriched in polar residues.

In terms of assembly, interacts with polyadenylate-binding protein PAB1.

The protein resides in the cytoplasm. Its subcellular location is the nucleus. In terms of biological role, required for nuclear migration during mitosis. It is required for the normal initiation of translation. Might mediate the dissociation of a specific protein complex of the translation machinery. Essential for viability. The polypeptide is Protein SIS1 (SIS1) (Saccharomyces cerevisiae (strain ATCC 204508 / S288c) (Baker's yeast)).